The sequence spans 218 residues: Superoxide dismutase [Mn], mitochondrial (218 aa).

The Mn(2+) site is built by histidine 27, histidine 84, aspartate 174, and histidine 178.

Belongs to the iron/manganese superoxide dismutase family. In terms of assembly, homotetramer. Mn(2+) serves as cofactor.

The protein localises to the mitochondrion matrix. The catalysed reaction is 2 superoxide + 2 H(+) = H2O2 + O2. Destroys superoxide anion radicals which are normally produced within the cells and which are toxic to biological systems. This is Superoxide dismutase [Mn], mitochondrial (SODA) from Chlamydomonas reinhardtii (Chlamydomonas smithii).